The following is a 57-amino-acid chain: DNA-directed RNA polymerase subunit Rpo6 (57 aa).

Belongs to the archaeal Rpo6/eukaryotic RPB6 RNA polymerase subunit family. In terms of assembly, part of the RNA polymerase complex.

It is found in the cytoplasm. The enzyme catalyses RNA(n) + a ribonucleoside 5'-triphosphate = RNA(n+1) + diphosphate. Functionally, DNA-dependent RNA polymerase (RNAP) catalyzes the transcription of DNA into RNA using the four ribonucleoside triphosphates as substrates. This Pyrococcus abyssi (strain GE5 / Orsay) protein is DNA-directed RNA polymerase subunit Rpo6.